Here is a 301-residue protein sequence, read N- to C-terminus: Cell division protein kinase 2 homolog CRK1 (301 aa).

A Protein kinase domain is found at 5–297 (YERQEKIGEG…AADALNHPYF (293 aa)). ATP contacts are provided by residues 11-19 (IGEGTYGVV) and Lys34. Residue Asp127 is the Proton acceptor of the active site. Thr160 bears the Phosphothreonine; by CAK mark.

Belongs to the protein kinase superfamily. CMGC Ser/Thr protein kinase family. CDC2/CDKX subfamily. As to quaternary structure, forms a stable but non-covalent complex with a regulatory subunit and with a cyclin.

The enzyme catalyses [DNA-directed RNA polymerase] + ATP = phospho-[DNA-directed RNA polymerase] + ADP + H(+). Phosphorylation at Thr-15 or Tyr-16 inactivates the enzyme, while phosphorylation at Thr-160 activates it. In terms of biological role, may be involved in some stage-specific role in the promastigote cell cycle. The protein is Cell division protein kinase 2 homolog CRK1 (CRK1) of Leishmania mexicana.